We begin with the raw amino-acid sequence, 122 residues long: Small ribosomal subunit protein uS12c (122 aa).

The protein belongs to the universal ribosomal protein uS12 family. As to quaternary structure, part of the 30S ribosomal subunit.

The protein localises to the plastid. It is found in the chloroplast. In terms of biological role, with S4 and S5 plays an important role in translational accuracy. Located at the interface of the 30S and 50S subunits. The polypeptide is Small ribosomal subunit protein uS12c (rps12) (Chloranthus spicatus (Chulantree)).